The chain runs to 154 residues: Myoglobin (154 aa).

Residues 2 to 148 (GLSDGEWQLV…FRNDIAAKYK (147 aa)) form the Globin domain. S4 carries the post-translational modification Phosphoserine. Position 65 (H65) interacts with nitrite. H65 contributes to the O2 binding site. T68 carries the phosphothreonine modification. H94 contributes to the heme b binding site.

It belongs to the globin family. As to quaternary structure, monomeric.

Its subcellular location is the cytoplasm. The protein localises to the sarcoplasm. It catalyses the reaction Fe(III)-heme b-[protein] + nitric oxide + H2O = Fe(II)-heme b-[protein] + nitrite + 2 H(+). The enzyme catalyses H2O2 + AH2 = A + 2 H2O. Monomeric heme protein which primary function is to store oxygen and facilitate its diffusion within muscle tissues. Reversibly binds oxygen through a pentacoordinated heme iron and enables its timely and efficient release as needed during periods of heightened demand. Depending on the oxidative conditions of tissues and cells, and in addition to its ability to bind oxygen, it also has a nitrite reductase activity whereby it regulates the production of bioactive nitric oxide. Under stress conditions, like hypoxia and anoxia, it also protects cells against reactive oxygen species thanks to its pseudoperoxidase activity. This chain is Myoglobin (MB), found in Lepilemur mustelinus (Weasel sportive lemur).